The following is a 260-amino-acid chain: Malonyl-[acyl-carrier protein] O-methyltransferase (260 aa).

The protein belongs to the methyltransferase superfamily.

It catalyses the reaction malonyl-[ACP] + S-adenosyl-L-methionine = malonyl-[ACP] methyl ester + S-adenosyl-L-homocysteine. It participates in cofactor biosynthesis; biotin biosynthesis. Converts the free carboxyl group of a malonyl-thioester to its methyl ester by transfer of a methyl group from S-adenosyl-L-methionine (SAM). It allows to synthesize pimeloyl-ACP via the fatty acid synthetic pathway. This Herminiimonas arsenicoxydans protein is Malonyl-[acyl-carrier protein] O-methyltransferase.